Consider the following 145-residue polypeptide: Basic phospholipase A2 GL1-1 (145 aa).

The signal sequence occupies residues 1–21 (MYPAHLLVLLAVCVSLLGASA). The propeptide occupies 22–27 (IPPLPL). 7 cysteine pairs are disulfide-bonded: C38/C98, C54/C144, C56/C72, C71/C125, C78/C118, C87/C111, and C105/C116. Ca(2+) is bound by residues Y55, G57, and G59. Residue H75 is part of the active site. D76 provides a ligand contact to Ca(2+). The active site involves D119.

It belongs to the phospholipase A2 family. Group I subfamily. D49 sub-subfamily. The cofactor is Ca(2+). As to expression, expressed by the venom gland.

The protein resides in the secreted. It carries out the reaction a 1,2-diacyl-sn-glycero-3-phosphocholine + H2O = a 1-acyl-sn-glycero-3-phosphocholine + a fatty acid + H(+). Its function is as follows. PLA2 catalyzes the calcium-dependent hydrolysis of the 2-acyl groups in 3-sn-phosphoglycerides. The polypeptide is Basic phospholipase A2 GL1-1 (Laticauda semifasciata (Black-banded sea krait)).